The following is a 212-amino-acid chain: Cyclin-dependent kinase inhibitor 3 (212 aa).

Polar residues predominate over residues 1-12 (MKPPSSIQTSEF). Positions 1-20 (MKPPSSIQTSEFDSSDEEPI) are disordered. The tract at residues 1–34 (MKPPSSIQTSEFDSSDEEPIEDEQTPIHISWLSL) is interaction with CDK2. The Tyrosine-protein phosphatase domain maps to 33 to 201 (SLSRVNCSQF…FRDKLAAHLS (169 aa)). Catalysis depends on cysteine 140, which acts as the Phosphocysteine intermediate.

Belongs to the protein-tyrosine phosphatase family. Interacts with cyclin-dependent kinases such as CDK1, CDK2 and CDK3. Does not interact with CDK4. Interacts (via C-terminus) with phosphorylated CDK2 (via C-terminal helix). Interacts with MS4A3 (via C-terminus); the interaction enhances CDKN3 enzymatic activity.

It is found in the cytoplasm. It localises to the perinuclear region. The catalysed reaction is O-phospho-L-tyrosyl-[protein] + H2O = L-tyrosyl-[protein] + phosphate. It carries out the reaction O-phospho-L-threonyl-[protein] + H2O = L-threonyl-[protein] + phosphate. It catalyses the reaction O-phospho-L-seryl-[protein] + H2O = L-seryl-[protein] + phosphate. Its function is as follows. May play a role in cell cycle regulation. Dual specificity CC phosphatase active toward substrates containing either phosphotyrosine or phosphoserine residues. Dephosphorylates CDK2 at 'Thr-160' in a cyclin-dependent manner. This Homo sapiens (Human) protein is Cyclin-dependent kinase inhibitor 3.